Here is a 113-residue protein sequence, read N- to C-terminus: Hydrogenase maturation factor HypA (113 aa).

His2 contributes to the Ni(2+) binding site. Cys73, Cys76, Cys89, and Cys92 together coordinate Zn(2+).

Belongs to the HypA/HybF family.

Functionally, involved in the maturation of [NiFe] hydrogenases. Required for nickel insertion into the metal center of the hydrogenase. The chain is Hydrogenase maturation factor HypA from Chlorobium phaeobacteroides (strain BS1).